Reading from the N-terminus, the 131-residue chain is Small ribosomal subunit protein uS11 (131 aa).

Residues 1-15 show a composition bias toward basic residues; it reads MAAKTVKKTRRRKER. A disordered region spans residues 1-23; that stretch reads MAAKTVKKTRRRKERKNVEHGAA.

The protein belongs to the universal ribosomal protein uS11 family. As to quaternary structure, part of the 30S ribosomal subunit. Interacts with proteins S7 and S18. Binds to IF-3.

Its function is as follows. Located on the platform of the 30S subunit, it bridges several disparate RNA helices of the 16S rRNA. Forms part of the Shine-Dalgarno cleft in the 70S ribosome. This is Small ribosomal subunit protein uS11 from Clostridium beijerinckii (strain ATCC 51743 / NCIMB 8052) (Clostridium acetobutylicum).